Reading from the N-terminus, the 329-residue chain is NADH-quinone oxidoreductase subunit H (329 aa).

9 helical membrane passes run 9-29 (LIKI…ATYI), 42-62 (GPCY…IKLF), 75-95 (FIFT…MAPI), 117-137 (IGFL…ILAG), 154-174 (IQLL…LMVV), 188-208 (GGFL…FLIA), 238-258 (LKWG…SFVI), 269-291 (WGFI…LSMW), and 309-329 (WKIM…IILI).

It belongs to the complex I subunit 1 family. As to quaternary structure, NDH-1 is composed of 14 different subunits. Subunits NuoA, H, J, K, L, M, N constitute the membrane sector of the complex.

It localises to the cell inner membrane. It carries out the reaction a quinone + NADH + 5 H(+)(in) = a quinol + NAD(+) + 4 H(+)(out). Functionally, NDH-1 shuttles electrons from NADH, via FMN and iron-sulfur (Fe-S) centers, to quinones in the respiratory chain. The immediate electron acceptor for the enzyme in this species is believed to be ubiquinone. Couples the redox reaction to proton translocation (for every two electrons transferred, four hydrogen ions are translocated across the cytoplasmic membrane), and thus conserves the redox energy in a proton gradient. This subunit may bind ubiquinone. The protein is NADH-quinone oxidoreductase subunit H of Helicobacter pylori (strain P12).